The primary structure comprises 459 residues: Alcohol acyl transferase 1 allele RGc (459 aa).

Catalysis depends on proton acceptor residues H164 and N385.

Belongs to the plant acyltransferase family. In terms of tissue distribution, expressed at very low levels in the skin of ripe fruit.

In terms of biological role, involved in the biosynthesis of volatile esters which confer ripe apple fruit flavor. Alcohol acyl transferase that can use a wide range of alcohols as substrate to produce esters. The chain is Alcohol acyl transferase 1 allele RGc from Malus domestica (Apple).